A 328-amino-acid polypeptide reads, in one-letter code: NADH-quinone oxidoreductase subunit H (328 aa).

The next 8 helical transmembrane spans lie at 8–28 (VAAI…AVGA), 81–101 (GLFV…FMVI), 114–134 (IGLL…LFAG), 154–174 (LSYE…AGSF), 186–206 (LWFI…GIAV), 237–257 (FFVG…TLFL), 265–285 (LPPI…FILL), and 304–324 (VCLP…LIFS).

The protein belongs to the complex I subunit 1 family. In terms of assembly, NDH-1 is composed of 14 different subunits. Subunits NuoA, H, J, K, L, M, N constitute the membrane sector of the complex.

The protein localises to the cell inner membrane. It carries out the reaction a quinone + NADH + 5 H(+)(in) = a quinol + NAD(+) + 4 H(+)(out). Functionally, NDH-1 shuttles electrons from NADH, via FMN and iron-sulfur (Fe-S) centers, to quinones in the respiratory chain. The immediate electron acceptor for the enzyme in this species is believed to be ubiquinone. Couples the redox reaction to proton translocation (for every two electrons transferred, four hydrogen ions are translocated across the cytoplasmic membrane), and thus conserves the redox energy in a proton gradient. This subunit may bind ubiquinone. In Chromohalobacter salexigens (strain ATCC BAA-138 / DSM 3043 / CIP 106854 / NCIMB 13768 / 1H11), this protein is NADH-quinone oxidoreductase subunit H.